The sequence spans 135 residues: S-protein homolog 20 (135 aa).

The N-terminal stretch at 1 to 26 is a signal peptide; that stretch reads MNGSSAFHIILSVTFMVFLFGGLCEA. The N-linked (GlcNAc...) asparagine glycan is linked to Asn-88.

It belongs to the plant self-incompatibility (S1) protein family.

It localises to the secreted. The polypeptide is S-protein homolog 20 (Arabidopsis thaliana (Mouse-ear cress)).